Reading from the N-terminus, the 87-residue chain is Protein anon-73B1 (87 aa).

A helical transmembrane segment spans residues 25–47 (LLIRYGLYVGALFQFVCISAAVL). The tract at residues 51–87 (NPDGQSNPESGEVTEREGEPVRTRLHKIRKLEKKKRR) is disordered. Positions 63–72 (VTEREGEPVR) are enriched in basic and acidic residues. Residues 73-87 (TRLHKIRKLEKKKRR) are compositionally biased toward basic residues.

Belongs to the UPF0239 family.

It is found in the membrane. The chain is Protein anon-73B1 (anon-73B1) from Drosophila melanogaster (Fruit fly).